The primary structure comprises 366 residues: CRS2-associated factor 2, mitochondrial (366 aa).

The N-terminal 14 residues, 1 to 14 (MLLPRDLLLLPWRR), are a transit peptide targeting the mitochondrion. The disordered stretch occupies residues 24-82 (RRLNHHRAPPFSDPDDDPPFTRLAERPPRAPSKKKKKEEEDQGGRIRPPEPASSDLPFD). Positions 60–71 (KEEEDQGGRIRP) are enriched in basic and acidic residues. CRM domains lie at 143-241 (EPLA…QRPQ) and 263-359 (DGLT…SVSL).

In terms of assembly, part of large ribonucleo-protein complexes that include group IIB introns.

The protein localises to the mitochondrion. In terms of biological role, may be involved in the splicing of group IIB introns in mitochondria. The sequence is that of CRS2-associated factor 2, mitochondrial from Oryza sativa subsp. japonica (Rice).